We begin with the raw amino-acid sequence, 474 residues long: Bifunctional protein HldE (474 aa).

The tract at residues 1–318 (MKLSMPRFDQ…RAIQREEGSE (318 aa)) is ribokinase. Residue 194-197 (NLSE) participates in ATP binding. The active site involves Asp-263. The tract at residues 343-474 (FTNGCFDILH…AIVEKIRGQG (132 aa)) is cytidylyltransferase.

The protein in the N-terminal section; belongs to the carbohydrate kinase PfkB family. It in the C-terminal section; belongs to the cytidylyltransferase family. In terms of assembly, homodimer.

It catalyses the reaction D-glycero-beta-D-manno-heptose 7-phosphate + ATP = D-glycero-beta-D-manno-heptose 1,7-bisphosphate + ADP + H(+). The enzyme catalyses D-glycero-beta-D-manno-heptose 1-phosphate + ATP + H(+) = ADP-D-glycero-beta-D-manno-heptose + diphosphate. It participates in nucleotide-sugar biosynthesis; ADP-L-glycero-beta-D-manno-heptose biosynthesis; ADP-L-glycero-beta-D-manno-heptose from D-glycero-beta-D-manno-heptose 7-phosphate: step 1/4. It functions in the pathway nucleotide-sugar biosynthesis; ADP-L-glycero-beta-D-manno-heptose biosynthesis; ADP-L-glycero-beta-D-manno-heptose from D-glycero-beta-D-manno-heptose 7-phosphate: step 3/4. Functionally, catalyzes the phosphorylation of D-glycero-D-manno-heptose 7-phosphate at the C-1 position to selectively form D-glycero-beta-D-manno-heptose-1,7-bisphosphate. In terms of biological role, catalyzes the ADP transfer from ATP to D-glycero-beta-D-manno-heptose 1-phosphate, yielding ADP-D-glycero-beta-D-manno-heptose. In Pseudomonas savastanoi pv. phaseolicola (strain 1448A / Race 6) (Pseudomonas syringae pv. phaseolicola (strain 1448A / Race 6)), this protein is Bifunctional protein HldE.